Reading from the N-terminus, the 706-residue chain is Elongation factor G (706 aa).

The 290-residue stretch at 8–297 (SYVRNIGIGA…AVVDYLPSPN (290 aa)) folds into the tr-type G domain. GTP is bound by residues 17–24 (AHIDAGKT), 95–99 (DTPGH), and 149–152 (NKMD).

Belongs to the TRAFAC class translation factor GTPase superfamily. Classic translation factor GTPase family. EF-G/EF-2 subfamily.

The protein localises to the cytoplasm. Functionally, catalyzes the GTP-dependent ribosomal translocation step during translation elongation. During this step, the ribosome changes from the pre-translocational (PRE) to the post-translocational (POST) state as the newly formed A-site-bound peptidyl-tRNA and P-site-bound deacylated tRNA move to the P and E sites, respectively. Catalyzes the coordinated movement of the two tRNA molecules, the mRNA and conformational changes in the ribosome. The protein is Elongation factor G of Orientia tsutsugamushi (strain Boryong) (Rickettsia tsutsugamushi).